A 303-amino-acid polypeptide reads, in one-letter code: 4-diphosphocytidyl-2-C-methyl-D-erythritol kinase (303 aa).

The active site involves Lys-24. 111–121 (PIASGIGGGSA) contacts ATP. Asp-153 is a catalytic residue.

The protein belongs to the GHMP kinase family. IspE subfamily.

The enzyme catalyses 4-CDP-2-C-methyl-D-erythritol + ATP = 4-CDP-2-C-methyl-D-erythritol 2-phosphate + ADP + H(+). It functions in the pathway isoprenoid biosynthesis; isopentenyl diphosphate biosynthesis via DXP pathway; isopentenyl diphosphate from 1-deoxy-D-xylulose 5-phosphate: step 3/6. Functionally, catalyzes the phosphorylation of the position 2 hydroxy group of 4-diphosphocytidyl-2C-methyl-D-erythritol. In Rhizobium johnstonii (strain DSM 114642 / LMG 32736 / 3841) (Rhizobium leguminosarum bv. viciae), this protein is 4-diphosphocytidyl-2-C-methyl-D-erythritol kinase.